A 161-amino-acid chain; its full sequence is Putative outer membrane protein YedS (161 aa).

Positions 1 to 21 are cleaved as a signal peptide; sequence MKRKVLAMLVPALLVAGAANA.

This sequence belongs to the Gram-negative porin family.

It is found in the cell outer membrane. The sequence is that of Putative outer membrane protein YedS (yedS) from Escherichia coli (strain K12).